A 405-amino-acid polypeptide reads, in one-letter code: 4-hydroxy-3-methylbut-2-en-1-yl diphosphate synthase (flavodoxin) (405 aa).

C297, C300, C343, and E350 together coordinate [4Fe-4S] cluster.

The protein belongs to the IspG family. The cofactor is [4Fe-4S] cluster.

It carries out the reaction (2E)-4-hydroxy-3-methylbut-2-enyl diphosphate + oxidized [flavodoxin] + H2O + 2 H(+) = 2-C-methyl-D-erythritol 2,4-cyclic diphosphate + reduced [flavodoxin]. Its pathway is isoprenoid biosynthesis; isopentenyl diphosphate biosynthesis via DXP pathway; isopentenyl diphosphate from 1-deoxy-D-xylulose 5-phosphate: step 5/6. Its function is as follows. Converts 2C-methyl-D-erythritol 2,4-cyclodiphosphate (ME-2,4cPP) into 1-hydroxy-2-methyl-2-(E)-butenyl 4-diphosphate. The protein is 4-hydroxy-3-methylbut-2-en-1-yl diphosphate synthase (flavodoxin) of Francisella tularensis subsp. mediasiatica (strain FSC147).